The sequence spans 513 residues: Probable DNA ligase (513 aa).

Position 213 (E213) interacts with ATP. K215 acts as the N6-AMP-lysine intermediate in catalysis. Residues R220, R235, E264, F304, R376, and K382 each contribute to the ATP site.

The protein belongs to the ATP-dependent DNA ligase family. It depends on Mg(2+) as a cofactor.

The enzyme catalyses ATP + (deoxyribonucleotide)n-3'-hydroxyl + 5'-phospho-(deoxyribonucleotide)m = (deoxyribonucleotide)n+m + AMP + diphosphate.. Functionally, DNA ligase that seals nicks in double-stranded DNA during DNA replication, DNA recombination and DNA repair. The sequence is that of Probable DNA ligase from Anaeromyxobacter dehalogenans (strain 2CP-C).